The sequence spans 315 residues: Small ribosomal subunit protein uS2 (315 aa).

A disordered region spans residues Leu-250 to Glu-315. Basic and acidic residues-rich tracts occupy residues Val-272–Asp-282 and Thr-297–Glu-315.

This sequence belongs to the universal ribosomal protein uS2 family.

The protein is Small ribosomal subunit protein uS2 of Clavibacter michiganensis subsp. michiganensis (strain NCPPB 382).